A 239-amino-acid chain; its full sequence is Large ribosomal subunit protein uL30 (239 aa).

Positions 1–37 are disordered; sequence MSKFVPENVQKKLARDEKLRKAKAEQRKASSAQMKQR. Residues 9–28 show a composition bias toward basic and acidic residues; it reads VQKKLARDEKLRKAKAEQRK.

It belongs to the universal ribosomal protein uL30 family.

The sequence is that of Large ribosomal subunit protein uL30 (RPL7) from Tetrahymena thermophila.